The sequence spans 302 residues: TATA-box-binding protein (302 aa).

Disordered stretches follow at residues 1–20 (MDQNNSLPPYAQGLASPQGA) and 53–121 (EEQQ…ASES). Composition is skewed to low complexity over residues 57–81 (RQQQQQQAAQSSTSQQATQGTSGQT), 89–101 (TLTTAPLPGTTPL), and 109–119 (MTPITPATPAS). 2 tandem repeats follow at residues 128-204 (LQNI…ARVV) and 218-295 (IQNM…YPIL).

Belongs to the TBP family. Belongs to the TFIID complex together with the TBP-associated factors (TAFs). Binds DNA as monomer.

It is found in the nucleus. Functionally, general transcription factor that functions at the core of the DNA-binding multiprotein factor TFIID. Binding of TFIID to the TATA box is the initial transcriptional step of the pre-initiation complex (PIC), playing a role in the activation of eukaryotic genes transcribed by RNA polymerase II. The sequence is that of TATA-box-binding protein (TBP) from Gallus gallus (Chicken).